The following is a 317-amino-acid chain: DNA repair nuclease/redox regulator APEX1 (317 aa).

A necessary for interaction with YBX1, binding to RNA, association together with NPM1 to rRNA, endoribonuclease activity on abasic RNA and localization in the nucleoli region spans residues 1-32 (MPKRGKRAAAEDGEEPKSEPETKKSKGAAKKT). The segment at 1 to 57 (MPKRGKRAAAEDGEEPKSEPETKKSKGAAKKTEKEAAGEGPVLYEDPPDQKTSASGK) is disordered. Lys-6 carries the post-translational modification N6-acetyllysine; by EP300. Positions 8 to 12 (AAAED) match the Nuclear localization signal (NLS) motif. Basic and acidic residues predominate over residues 15 to 37 (EPKSEPETKKSKGAAKKTEKEAA). Ser-18 carries the phosphoserine modification. Positions 22–32 (TKKSKGAAKKT) are necessary for interaction with NPM1 and for efficient rRNA binding. N6-acetyllysine is present on residues Lys-26, Lys-30, Lys-31, and Lys-34. Position 53 is a phosphoserine (Ser-53). The Nuclear export signal (NES) motif lies at 63–79 (ICSWNVDGLRAWIKKKG). Cys-64 carries the S-nitrosocysteine; alternate modification. A disulfide bridge connects residues Cys-64 and Cys-92. Asp-69 contributes to the Mg(2+) binding site. At Cys-92 the chain carries S-nitrosocysteine; alternate. Glu-95 contributes to the Mg(2+) binding site. Residue Tyr-170 is part of the active site. An N6-acetyllysine modification is found at Lys-196. Asp-209 and Asn-211 together coordinate Mg(2+). Residue Asp-209 is the Proton donor/acceptor of the active site. Position 232 is a phosphothreonine; by CDK5 (Thr-232). The tract at residues 288–317 (HSLLPALCDSKIRSKALGSDHCPITLYLAL) is mitochondrial targeting sequence (MTS). Position 307 (Asp-307) interacts with Mg(2+). An S-nitrosocysteine modification is found at Cys-309.

It belongs to the DNA repair enzymes AP/ExoA family. As to quaternary structure, monomer. Homodimer; disulfide-linked. Component of the SET complex, composed of at least APEX1, SET, ANP32A, HMGB2, NME1 and TREX1. Associates with the dimer XRCC5/XRCC6 in a DNA-dependent manner. Interacts with SIRT1; the interaction is increased in the context of genotoxic stress. Interacts with HDAC1, HDAC2 and HDAC3; the interactions are not dependent on the APEX1 acetylation status. Interacts with XRCC1; the interaction is induced by SIRT1 and increased with the APEX1 acetylated form. Interacts with NPM1 (via N-terminal domain); the interaction is RNA-dependent and decreases in hydrogen peroxide-damaged cells. Interacts (via N-terminus) with YBX1 (via C-terminus); the interaction is increased in presence of APEX1 acetylated. Interacts with HNRNPL; the interaction is DNA-dependent. Interacts (via N-terminus) with KPNA1 and KPNA2. Interacts with TXN; the interaction stimulates the FOS/JUN AP-1 complex DNA-binding activity in a redox-dependent manner. Interacts with GZMA, KRT8, MDM2, POLB, PRDX6, PRPF19, RPLP0, TOMM20 and WDR77. Binds to CDK5. Mg(2+) is required as a cofactor. Requires Mn(2+) as cofactor. In terms of processing, phosphorylated. Phosphorylation by kinase PKC or casein kinase CK2 results in enhanced redox activity that stimulates binding of the FOS/JUN AP-1 complex to its cognate binding site. AP-endodeoxyribonuclease activity is not affected by CK2-mediated phosphorylation. Phosphorylation of Thr-232 by CDK5 in response to MPP(+)/MPTP (1-methyl-4-phenylpyridinium) reduces AP-endodeoxyribonuclease activity resulting in accumulation of DNA damage and contributing to neuronal death. Acetylated on Lys-6. Acetylation is increased by the transcriptional coactivator EP300 acetyltransferase, genotoxic agents like H(2)O(2) and methyl methanesulfonate (MMS). Acetylation increases its binding affinity to the negative calcium response element (nCaRE) DNA promoter. The acetylated form induces a stronger binding of YBX1 to the Y-box sequence in the MDR1 promoter than the unacetylated form. Deacetylated on lysines. Lys-6 is deacetylated by SIRT1. Post-translationally, cleaved at Lys-30 by granzyme A to create the mitochondrial form; leading in reduction of binding to DNA, AP endodeoxyribonuclease activity, redox activation of transcription factors and to enhanced cell death. Cleaved by granzyme K; leading to intracellular ROS accumulation and enhanced cell death after oxidative stress. In terms of processing, cys-64 and Cys-92 are nitrosylated in response to nitric oxide (NO) and lead to the exposure of the nuclear export signal (NES). Ubiquitinated by MDM2; leading to translocation to the cytoplasm and proteasomal degradation.

Its subcellular location is the nucleus. The protein resides in the nucleolus. The protein localises to the nucleus speckle. It localises to the endoplasmic reticulum. It is found in the cytoplasm. Its subcellular location is the mitochondrion. The enzyme catalyses a deoxyribonucleotide-2'-deoxyribose-5'-monophosphate-DNA + H2O = a 5'-end 2'-deoxyribose-5'-monophosphate-DNA + a 3'-end 2'-deoxyribonucleotide-DNA + H(+). The catalysed reaction is Exonucleolytic cleavage in the 3'- to 5'-direction to yield nucleoside 5'-phosphates.. It carries out the reaction a 3'-end 2'-deoxyribonucleotide-3'-phosphoglycolate-DNA + H2O = 2-phosphoglycolate + a 3'-end 2'-deoxyribonucleotide-DNA + H(+). It catalyses the reaction a 3'-end 2'-deoxyribonucleotide-8-oxoguanine-DNA + H2O = 8-oxo-dGMP + a 3'-end 2'-deoxyribonucleotide-DNA + H(+). NPM1 stimulates endodeoxyribonuclease activity on double-stranded DNA with AP sites, but inhibits endoribonuclease activity on single-stranded RNA containing AP sites. In terms of biological role, multifunctional protein that plays a central role in the cellular response to oxidative stress. The two major activities of APEX1 are DNA repair and redox regulation of transcriptional factors. Functions as an apurinic/apyrimidinic (AP) endodeoxyribonuclease in the base excision repair (BER) pathway of DNA lesions induced by oxidative and alkylating agents. Initiates repair of AP sites in DNA by catalyzing hydrolytic incision of the phosphodiester backbone immediately adjacent to the damage, generating a single-strand break with 5'-deoxyribose phosphate and 3'-hydroxyl ends. Also incises at AP sites in the DNA strand of DNA/RNA hybrids, single-stranded DNA regions of R-loop structures, and single-stranded RNA molecules. Operates at switch sites of immunoglobulin (Ig) constant regions where it mediates Ig isotype class switch recombination. Processes AP sites induced by successive action of AICDA and UNG. Generates staggered nicks in opposite DNA strands resulting in the formation of double-strand DNA breaks that are finally resolved via non-homologous end joining repair pathway. Has 3'-5' exodeoxyribonuclease activity on mismatched deoxyribonucleotides at the 3' termini of nicked or gapped DNA molecules during short-patch BER. Possesses DNA 3' phosphodiesterase activity capable of removing lesions (such as phosphoglycolate and 8-oxoguanine) blocking the 3' side of DNA strand breaks. Also acts as an endoribonuclease involved in the control of single-stranded RNA metabolism. Plays a role in regulating MYC mRNA turnover by preferentially cleaving in between UA and CA dinucleotides of the MYC coding region determinant (CRD). In association with NMD1, plays a role in the rRNA quality control process during cell cycle progression. Acts as a loading factor for POLB onto non-incised AP sites in DNA and stimulates the 5'-terminal deoxyribose 5'-phosphate (dRp) excision activity of POLB. Exerts reversible nuclear redox activity to regulate DNA binding affinity and transcriptional activity of transcriptional factors by controlling the redox status of their DNA-binding domain, such as the FOS/JUN AP-1 complex after exposure to IR. Involved in calcium-dependent down-regulation of parathyroid hormone (PTH) expression by binding to negative calcium response elements (nCaREs). Together with HNRNPL or the dimer XRCC5/XRCC6, associates with nCaRE, acting as an activator of transcriptional repression. May also play a role in the epigenetic regulation of gene expression by participating in DNA demethylation. Stimulates the YBX1-mediated MDR1 promoter activity, when acetylated at Lys-6 and Lys-7, leading to drug resistance. Plays a role in protection from granzyme-mediated cellular repair leading to cell death. Binds DNA and RNA. Associates, together with YBX1, on the MDR1 promoter. Together with NPM1, associates with rRNA. In Rattus norvegicus (Rat), this protein is DNA repair nuclease/redox regulator APEX1 (Apex1).